Reading from the N-terminus, the 110-residue chain is Phosphoribosyl-AMP cyclohydrolase (110 aa).

D80 provides a ligand contact to Mg(2+). Position 81 (C81) interacts with Zn(2+). Positions 82 and 84 each coordinate Mg(2+). Zn(2+) is bound by residues C97 and C104.

Belongs to the PRA-CH family. Homodimer. Mg(2+) serves as cofactor. It depends on Zn(2+) as a cofactor.

Its subcellular location is the cytoplasm. It carries out the reaction 1-(5-phospho-beta-D-ribosyl)-5'-AMP + H2O = 1-(5-phospho-beta-D-ribosyl)-5-[(5-phospho-beta-D-ribosylamino)methylideneamino]imidazole-4-carboxamide. It participates in amino-acid biosynthesis; L-histidine biosynthesis; L-histidine from 5-phospho-alpha-D-ribose 1-diphosphate: step 3/9. In terms of biological role, catalyzes the hydrolysis of the adenine ring of phosphoribosyl-AMP. This is Phosphoribosyl-AMP cyclohydrolase from Clostridium botulinum (strain Kyoto / Type A2).